The sequence spans 566 residues: MSKSRRVFLSIQGDDDFWGNGDQLEGKTLSSIKQQESKKMDDSVEGMEEEKYFFRQSKLGRQNLERLHEKEEQECEEERLDWSEKVDSEEEEEDIQEQDEIITEGKETEMFDSGPETDQKMPVDPNEGFYNNYRSYFSGRPEMLFLIRSIDESATDYYEKPFIDLYETTRKRLEMYPNTELNQILRCACNPNAGGGADYRVRNKHAVVVSNFREPDRRLGRYSKYYYHHNVGPEVYSRKVFVGGLPACVKEMDILHFFSRYGRLQVDWPSKHYGCKSDSDPSVYNEPSFTPPTSHLGLSSPPFGQINPFMTDCPPAPSDLQMSRHGSVDGGGGGFPTHGMSMRNIGFGGGSGPRSTGEGEKKQQHLGYVFLLFEKERSVRDLVTECFEEEEGLFIILESAIEPIRVQIRPWLLADAEFLMDFNVPINTKMVAFIGGVPRPLKAVELAHFFEQTYGNVVCVGIDIDNKFKYPRGSGRVAFSNYHAYVQAITDRYIVLDHEDIHKRVEIKPYFFHNQSCEECSSRYHRQYAPFFCPSLECFQYYCEPCWHKMHARPSRFHHMPVVKGI.

Disordered regions lie at residues 17 to 46 (FWGN…SVEG) and 64 to 98 (LERL…IQEQ). The segment covering 87–98 (DSEEEEEDIQEQ) has biased composition (acidic residues). Positions 430–512 (MVAFIGGVPR…KRVEIKPYFF (83 aa)) constitute an RRM domain.

Cytoplasmic polyadenylation element binding protein that binds to and regulates the translation of specific mRNAs. This is Cytoplasmic polyadenylation element-binding protein 2 (cpb-2) from Caenorhabditis briggsae.